We begin with the raw amino-acid sequence, 620 residues long: Ion-translocating oxidoreductase complex subunit C (620 aa).

2 4Fe-4S ferredoxin-type domains span residues 366–397 (TEMG…QQLY) and 407–436 (KARN…VQYY). Positions 377, 380, 383, 387, 416, 419, 422, and 426 each coordinate [4Fe-4S] cluster.

The protein belongs to the 4Fe4S bacterial-type ferredoxin family. RnfC subfamily. The complex is composed of six subunits: RnfA, RnfB, RnfC, RnfD, RnfE and RnfG. The cofactor is [4Fe-4S] cluster.

It localises to the cell inner membrane. Part of a membrane-bound complex that couples electron transfer with translocation of ions across the membrane. The polypeptide is Ion-translocating oxidoreductase complex subunit C (Yersinia pestis bv. Antiqua (strain Antiqua)).